A 250-amino-acid polypeptide reads, in one-letter code: Proteasome subunit alpha (250 aa).

This sequence belongs to the peptidase T1A family. The 20S proteasome core is composed of 14 alpha and 14 beta subunits that assemble into four stacked heptameric rings, resulting in a barrel-shaped structure. The two inner rings, each composed of seven catalytic beta subunits, are sandwiched by two outer rings, each composed of seven alpha subunits. The catalytic chamber with the active sites is on the inside of the barrel. Has a gated structure, the ends of the cylinder being occluded by the N-termini of the alpha-subunits. Is capped at one or both ends by the proteasome regulatory ATPase, PAN.

Its subcellular location is the cytoplasm. With respect to regulation, the formation of the proteasomal ATPase PAN-20S proteasome complex, via the docking of the C-termini of PAN into the intersubunit pockets in the alpha-rings, triggers opening of the gate for substrate entry. Interconversion between the open-gate and close-gate conformations leads to a dynamic regulation of the 20S proteasome proteolysis activity. In terms of biological role, component of the proteasome core, a large protease complex with broad specificity involved in protein degradation. This is Proteasome subunit alpha from Methanobrevibacter smithii (strain ATCC 35061 / DSM 861 / OCM 144 / PS).